We begin with the raw amino-acid sequence, 292 residues long: 4-hydroxy-tetrahydrodipicolinate synthase (292 aa).

Residue Thr45 participates in pyruvate binding. Tyr133 acts as the Proton donor/acceptor in catalysis. Lys161 functions as the Schiff-base intermediate with substrate in the catalytic mechanism. Residue Ile203 participates in pyruvate binding.

This sequence belongs to the DapA family. In terms of assembly, homotetramer; dimer of dimers.

It is found in the cytoplasm. It carries out the reaction L-aspartate 4-semialdehyde + pyruvate = (2S,4S)-4-hydroxy-2,3,4,5-tetrahydrodipicolinate + H2O + H(+). It functions in the pathway amino-acid biosynthesis; L-lysine biosynthesis via DAP pathway; (S)-tetrahydrodipicolinate from L-aspartate: step 3/4. Catalyzes the condensation of (S)-aspartate-beta-semialdehyde [(S)-ASA] and pyruvate to 4-hydroxy-tetrahydrodipicolinate (HTPA). The polypeptide is 4-hydroxy-tetrahydrodipicolinate synthase (Cronobacter sakazakii (strain ATCC BAA-894) (Enterobacter sakazakii)).